The following is a 230-amino-acid chain: Ribosomal RNA small subunit methyltransferase G (230 aa).

Residues G93, L98, 144–145 (IE), and R158 each bind S-adenosyl-L-methionine.

Belongs to the methyltransferase superfamily. RNA methyltransferase RsmG family.

The protein localises to the cytoplasm. The enzyme catalyses guanosine(527) in 16S rRNA + S-adenosyl-L-methionine = N(7)-methylguanosine(527) in 16S rRNA + S-adenosyl-L-homocysteine. Specifically methylates the N7 position of guanine in position 527 of 16S rRNA. The chain is Ribosomal RNA small subunit methyltransferase G from Bordetella parapertussis (strain 12822 / ATCC BAA-587 / NCTC 13253).